We begin with the raw amino-acid sequence, 872 residues long: Protein translocase subunit SecA (872 aa).

ATP contacts are provided by residues Q87, 105–109 (GEGKT), and D500. Zn(2+) contacts are provided by C855, C857, C866, and H867.

The protein belongs to the SecA family. In terms of assembly, monomer and homodimer. Part of the essential Sec protein translocation apparatus which comprises SecA, SecYEG and auxiliary proteins SecDF-YajC and YidC. Zn(2+) serves as cofactor.

The protein localises to the cell inner membrane. Its subcellular location is the cytoplasm. The catalysed reaction is ATP + H2O + cellular proteinSide 1 = ADP + phosphate + cellular proteinSide 2.. Its function is as follows. Part of the Sec protein translocase complex. Interacts with the SecYEG preprotein conducting channel. Has a central role in coupling the hydrolysis of ATP to the transfer of proteins into and across the cell membrane, serving both as a receptor for the preprotein-SecB complex and as an ATP-driven molecular motor driving the stepwise translocation of polypeptide chains across the membrane. This chain is Protein translocase subunit SecA, found in Anaplasma marginale (strain St. Maries).